The chain runs to 625 residues: Grainyhead-like protein 2 homolog (625 aa).

Disordered regions lie at residues 1-24, 82-112, and 428-453; these read MSQE…PPFN, VSKA…GGEN, and EERK…SDGK. Positions 1 to 93 are transcription activation; it reads MSQESDNNKR…KASDSQEDQE (93 aa). Polar residues-rich tracts occupy residues 98 to 109 and 440 to 451; these read LGTSEAQSNLSG and QASQTQCNSSSD. The Grh/CP2 DB domain occupies 244-482; sequence SSGTFQYTLE…DLHSQPVLFI (239 aa).

Belongs to the grh/CP2 family. Grainyhead subfamily. Homodimer, also forms heterodimers with GRHL1 or GRHL3. Expressed in keratinocytes (at protein level). Highly expressed in placenta, prostate, brain and kidney. Lower-level expression in a variety of epithelial tissues such as thymus, lung, salivary gland, mammary gland and digestive tract. Expressed in the cochlear. Expressed in corneal epithelial cells, but not in the endothelium or stroma.

Its subcellular location is the nucleus. It is found in the membrane. Its function is as follows. Transcription factor playing an important role in primary neurulation and in epithelial development. Binds directly to the consensus DNA sequence 5'-AACCGGTT-3' acting as an activator and repressor on distinct target genes. During embryogenesis, plays unique and cooperative roles with GRHL3 in establishing distinct zones of primary neurulation. Essential for closure 3 (rostral end of the forebrain), functions cooperatively with GRHL3 in closure 2 (forebrain/midbrain boundary) and posterior neuropore closure. Regulates epithelial morphogenesis acting as a target gene-associated transcriptional activator of apical junctional complex components. Up-regulates of CLDN3 and CLDN4, as well as of RAB25, which increases the CLDN4 protein and its localization at tight junctions. Comprises an essential component of the transcriptional machinery that establishes appropriate expression levels of CLDN4 and CDH1 in different types of epithelia. Exhibits functional redundancy with GRHL3 in epidermal morphogenetic events and epidermal wound repair. In lung, forms a regulatory loop with NKX2-1 that coordinates lung epithelial cell morphogenesis and differentiation. In keratinocytes, plays a role in telomerase activation during cellular proliferation, regulates TERT expression by binding to TERT promoter region and inhibiting DNA methylation at the 5'-CpG island, possibly by interfering with DNMT1 enzyme activity. In addition, impairs keratinocyte differentiation and epidermal function by inhibiting the expression of genes clustered at the epidermal differentiation complex (EDC) as well as GRHL1 and GRHL3 through epigenetic mechanisms. The chain is Grainyhead-like protein 2 homolog (GRHL2) from Homo sapiens (Human).